The chain runs to 436 residues: Serine/threonine-protein kinase STK11 (436 aa).

At Ser31 the chain carries Phosphoserine. Residues Lys44 and Lys48 each carry the N6-acetyllysine modification. The sufficient for interaction with SIRT1 stretch occupies residues Leu45–Asn90. The Protein kinase domain occupies Tyr49–Phe309. Residues Leu55–Val63 and Lys78 contribute to the ATP site. N6-acetyllysine is present on residues Lys96 and Lys97. The Proton acceptor role is filled by Asp176. Position 189 is a phosphothreonine; by autocatalysis (Thr189). An N6-acetyllysine mark is found at Lys296 and Lys311. Ser325 is modified (phosphoserine). Phosphothreonine; by autocatalysis is present on Thr336. Thr366 is subject to Phosphothreonine; by ATM and autocatalysis. Residues Gly397–Val421 form a disordered region. Position 403 is a phosphoserine (Ser403). Lys420 bears the N6-acetyllysine mark. Cys422 carries the S-palmitoyl cysteine lipid modification. An N6-acetyllysine modification is found at Lys426. Ser431 carries the phosphoserine; by autocatalysis, PKA, PKC/PRKCZ and RPS6KA1 modification. Residue Cys433 is modified to Cysteine methyl ester. A lipid anchor (S-farnesyl cysteine) is attached at Cys433. The residue at position 434 (Lys434) is an N6-acetyllysine. The propeptide at Lys434–Gln436 is removed in mature form.

It belongs to the protein kinase superfamily. CAMK Ser/Thr protein kinase family. LKB1 subfamily. Catalytic component of a trimeric complex composed of STK11/LKB1, STRAD (STRADA or STRADB) and CAB39/MO25 (CAB39/MO25alpha or CAB39L/MO25beta): the complex tethers STK11/LKB1 in the cytoplasm and stimulates its catalytic activity. Found in a ternary complex composed of SMAD4, STK11/LKB1 and STK11IP. Interacts with NR4A1, p53/TP53, SMAD4, STK11IP and WDR6. Interacts with NISCH; this interaction may increase STK11 activity. Interacts with SIRT1; the interaction deacetylates STK11. Interacts with CDKN1A. The cofactor is Mg(2+). Mn(2+) serves as cofactor. Post-translationally, phosphorylated by ATM at Thr-366 following ionizing radiation (IR). Phosphorylation at Ser-431 by RPS6KA1 and/or some PKA is required to inhibit cell growth. Phosphorylation at Ser-431 is also required during neuronal polarization to mediate phosphorylation of BRSK1 and BRSK2. Phosphorylation by PKC/PRKCZ at Ser-397 in isoform 2 promotes metformin (or peroxynitrite)-induced nuclear export of STK11 and activation of AMPK. UV radiation -induced phosphorylation at Thr-366 mediates CDKN1A degradation. Acetylated. Deacetylation at Lys-48 enhances cytoplasmic localization and kinase activity in vitro. As to expression, expressed in brain, heart, testis, skeletal muscle and spleen, and weakly in liver and kidney. Isoform 1 is expressed at highest levels in the brain. Isoform 2 is expressed at highest levels in the testis, primarily in postmitotic developing germ cells (at protein level).

The protein localises to the nucleus. It localises to the cytoplasm. The protein resides in the membrane. Its subcellular location is the mitochondrion. The catalysed reaction is L-seryl-[protein] + ATP = O-phospho-L-seryl-[protein] + ADP + H(+). The enzyme catalyses L-threonyl-[protein] + ATP = O-phospho-L-threonyl-[protein] + ADP + H(+). With respect to regulation, activated by forming a complex with STRAD (STRADA or STRADB) and CAB39/MO25 (CAB39/MO25alpha or CAB39L/MO25beta): STRADA (or STRADB)-binding promotes a conformational change of STK11/LKB1 in an active conformation, which is stabilized by CAB39/MO25alpha (or CAB39L/MO25beta) interacting with the STK11/LKB1 activation loop. Sequestration in the nucleus by NR4A1 prevents it from phosphorylating and activating cytoplasmic AMPK. Functionally, tumor suppressor serine/threonine-protein kinase that controls the activity of AMP-activated protein kinase (AMPK) family members, thereby playing a role in various processes such as cell metabolism, cell polarity, apoptosis and DNA damage response. Acts by phosphorylating the T-loop of AMPK family proteins, thus promoting their activity: phosphorylates PRKAA1, PRKAA2, BRSK1, BRSK2, MARK1, MARK2, MARK3, MARK4, NUAK1, NUAK2, SIK1, SIK2, SIK3 and SNRK but not MELK. Also phosphorylates non-AMPK family proteins such as STRADA, PTEN and possibly p53/TP53. Acts as a key upstream regulator of AMPK by mediating phosphorylation and activation of AMPK catalytic subunits PRKAA1 and PRKAA2 and thereby regulates processes including: inhibition of signaling pathways that promote cell growth and proliferation when energy levels are low, glucose homeostasis in liver, activation of autophagy when cells undergo nutrient deprivation, and B-cell differentiation in the germinal center in response to DNA damage. Also acts as a regulator of cellular polarity by remodeling the actin cytoskeleton. Required for cortical neuron polarization by mediating phosphorylation and activation of BRSK1 and BRSK2, leading to axon initiation and specification. Involved in DNA damage response: interacts with p53/TP53 and recruited to the CDKN1A/WAF1 promoter to participate in transcription activation. Able to phosphorylate p53/TP53; the relevance of such result in vivo is however unclear and phosphorylation may be indirect and mediated by downstream STK11/LKB1 kinase NUAK1. Also acts as a mediator of p53/TP53-dependent apoptosis via interaction with p53/TP53: translocates to the mitochondrion during apoptosis and regulates p53/TP53-dependent apoptosis pathways. Regulates UV radiation-induced DNA damage response mediated by CDKN1A. In association with NUAK1, phosphorylates CDKN1A in response to UV radiation and contributes to its degradation which is necessary for optimal DNA repair. In terms of biological role, has a role in spermiogenesis. The chain is Serine/threonine-protein kinase STK11 from Rattus norvegicus (Rat).